The sequence spans 545 residues: 4-coumarate--CoA ligase 2 (545 aa).

6 residues coordinate ATP: Ser-192, Ser-193, Gly-194, Thr-195, Thr-196, and Lys-200. (E)-4-coumaroyl-AMP contacts are provided by Tyr-242 and Ser-246. Lys-263 is a CoA binding site. The interval 265-334 is SBD1; that stretch reads DIAQFLELIP…AKFPNAKLGQ (70 aa). (E)-4-coumaroyl-AMP is bound by residues Ala-312, Gln-334, Gly-335, Thr-339, and Met-347. 3 residues coordinate ATP: Gln-334, Gly-335, and Thr-339. An SBD2 region spans residues 335–402; the sequence is GYGMTEAGPV…IRGDQIMKGY (68 aa). ATP is bound by residues Asp-423 and Arg-438. (E)-4-coumaroyl-AMP is bound by residues Lys-440 and Lys-444. Positions 446 and 447 each coordinate CoA. Lys-529 serves as a coordination point for ATP.

The protein belongs to the ATP-dependent AMP-binding enzyme family. Mg(2+) serves as cofactor.

The enzyme catalyses (E)-4-coumarate + ATP + CoA = (E)-4-coumaroyl-CoA + AMP + diphosphate. The catalysed reaction is (E)-4-coumarate + ATP + H(+) = (E)-4-coumaroyl-AMP + diphosphate. It carries out the reaction (E)-4-coumaroyl-AMP + CoA = (E)-4-coumaroyl-CoA + AMP + H(+). It functions in the pathway phytoalexin biosynthesis; 3,4',5-trihydroxystilbene biosynthesis; 3,4',5-trihydroxystilbene from trans-4-coumarate: step 1/2. Carboxylate--CoA ligase that may use 4-coumarate as substrate. Follows a two-step reaction mechanism, wherein the carboxylate substrate first undergoes adenylation by ATP, followed by a thioesterification in the presence of CoA to yield the final CoA thioester. The sequence is that of 4-coumarate--CoA ligase 2 (4CL2) from Solanum tuberosum (Potato).